The following is a 426-amino-acid chain: Tol-Pal system protein TolB (426 aa).

An N-terminal signal peptide occupies residues 1 to 24 (MKLKSRYTSLISVVSIFFSSMVMA).

The protein belongs to the TolB family. As to quaternary structure, the Tol-Pal system is composed of five core proteins: the inner membrane proteins TolA, TolQ and TolR, the periplasmic protein TolB and the outer membrane protein Pal. They form a network linking the inner and outer membranes and the peptidoglycan layer.

The protein localises to the periplasm. Part of the Tol-Pal system, which plays a role in outer membrane invagination during cell division and is important for maintaining outer membrane integrity. The chain is Tol-Pal system protein TolB from Haemophilus ducreyi (strain 35000HP / ATCC 700724).